Consider the following 523-residue polypeptide: Leucine-rich repeat-containing protein 27 (523 aa).

A disordered region spans residues 1 to 26 (MEDTSPQAVAEKAAKDPKAAKDLKDD). Residues 12-26 (KAAKDPKAAKDLKDD) show a composition bias toward basic and acidic residues. LRR repeat units follow at residues 55-76 (SSPV…FKIP), 77-98 (NLQQ…FFQL), 101-122 (NLTW…IGSH), 124-145 (HLKT…LGQV), and 147-168 (TLTA…IVQK). Disordered regions lie at residues 206-236 (QYPV…ADFF) and 372-394 (REQT…HSNM). Basic and acidic residues-rich tracts occupy residues 227-236 (DQEKEKADFF) and 372-385 (REQT…RELS). 2 coiled-coil regions span residues 335 to 374 (VHAN…WREQ) and 463 to 494 (MQDI…TLNK). The segment at 503 to 523 (GNLSLHPPASQPQNIFFNTKS) is disordered. The segment covering 513–523 (QPQNIFFNTKS) has biased composition (polar residues).

This is Leucine-rich repeat-containing protein 27 (Lrrc27) from Mus musculus (Mouse).